Here is a 142-residue protein sequence, read N- to C-terminus: Hemoglobin subunit zeta (142 aa).

Position 2 is an N-acetylserine (Ser2). A Globin domain is found at 2 to 142; that stretch reads SLTKTEGTII…VSSVLTEKYR (141 aa). Thr29 is modified (phosphothreonine). Ser53 is subject to Phosphoserine. A heme b-binding site is contributed by His59. Residues Ser73 and Ser82 each carry the phosphoserine modification. His88 provides a ligand contact to heme b.

It belongs to the globin family. In terms of assembly, heterotetramer of two zeta chains and beta-type chains.

The zeta chain is an alpha-type chain of mammalian embryonic hemoglobin. This is Hemoglobin subunit zeta (HBZ1) from Pan troglodytes (Chimpanzee).